A 231-amino-acid polypeptide reads, in one-letter code: Probable septum site-determining protein MinC (231 aa).

The segment at 102–125 is disordered; the sequence is KEKAPRPAPAPQAPTQNTTPVTKT. Positions 114–123 are enriched in low complexity; it reads APTQNTTPVT.

This sequence belongs to the MinC family. Interacts with MinD and FtsZ.

Its function is as follows. Cell division inhibitor that blocks the formation of polar Z ring septums. Rapidly oscillates between the poles of the cell to destabilize FtsZ filaments that have formed before they mature into polar Z rings. Prevents FtsZ polymerization. In Escherichia coli O45:K1 (strain S88 / ExPEC), this protein is Probable septum site-determining protein MinC.